The chain runs to 168 residues: uncharacterized protein (168 aa).

Residues 36–56 (LNWWQLIVVVGIAISGIAAIA) form a helical membrane-spanning segment. The N-linked (GlcNAc...) asparagine; by host glycan is linked to N74. The next 3 helical transmembrane spans lie at 86 to 106 (FIII…LAWL), 115 to 135 (KLLT…ALTI), and 143 to 163 (MVKL…GFFI). A glycan (N-linked (GlcNAc...) asparagine; by host) is linked at N164.

The protein resides in the membrane. This is an uncharacterized protein from Acanthamoeba polyphaga mimivirus (APMV).